The following is a 204-amino-acid chain: MGAYKYMQEIWRKKQSDALRYLLRIRTWHYRQLSAVHRVPRPTRPEKARRLGYRAKQGFVVYRVRVRRGNRKRPVCKGQTYGKPKTHGVNELKNAKSKQAVAEGRAGRRLGSLRVLNSYWVAEDSTYKFYEVVLIDPFHKAIRRNPDTQWITKPVHKHREQRGLTSAGRKSRGLGKGWRFSATRGGSQAKNWKRKNTKVFHRKR.

Positions valine 155–arginine 204 are disordered. The span at asparagine 191–arginine 204 shows a compositional bias: basic residues.

Belongs to the eukaryotic ribosomal protein eL15 family.

In Caenorhabditis elegans, this protein is Large ribosomal subunit protein eL15 (rpl-15).